A 181-amino-acid chain; its full sequence is Isopentenyl-diphosphate Delta-isomerase (181 aa).

His-25 and His-32 together coordinate Mn(2+). The Nudix hydrolase domain occupies 30–164 (PLHLAFSCWL…PWAFSPWMVM (135 aa)). Cys-67 is a catalytic residue. Residue His-69 participates in Mn(2+) binding. Glu-87 contributes to the Mg(2+) binding site. Mn(2+) contacts are provided by Glu-114 and Glu-116. Residue Glu-116 is part of the active site.

Belongs to the IPP isomerase type 1 family. Homodimer. Requires Mg(2+) as cofactor. Mn(2+) serves as cofactor.

The protein localises to the cytoplasm. It catalyses the reaction isopentenyl diphosphate = dimethylallyl diphosphate. It participates in isoprenoid biosynthesis; dimethylallyl diphosphate biosynthesis; dimethylallyl diphosphate from isopentenyl diphosphate: step 1/1. In terms of biological role, catalyzes the 1,3-allylic rearrangement of the homoallylic substrate isopentenyl (IPP) to its highly electrophilic allylic isomer, dimethylallyl diphosphate (DMAPP). This chain is Isopentenyl-diphosphate Delta-isomerase, found in Salmonella paratyphi B (strain ATCC BAA-1250 / SPB7).